The sequence spans 67 residues: DNA-directed RNA polymerase subunit omega (67 aa).

This sequence belongs to the RNA polymerase subunit omega family. As to quaternary structure, the RNAP catalytic core consists of 2 alpha, 1 beta, 1 beta' and 1 omega subunit. When a sigma factor is associated with the core the holoenzyme is formed, which can initiate transcription.

The enzyme catalyses RNA(n) + a ribonucleoside 5'-triphosphate = RNA(n+1) + diphosphate. In terms of biological role, promotes RNA polymerase assembly. Latches the N- and C-terminal regions of the beta' subunit thereby facilitating its interaction with the beta and alpha subunits. The polypeptide is DNA-directed RNA polymerase subunit omega (Delftia acidovorans (strain DSM 14801 / SPH-1)).